The primary structure comprises 1252 residues: LRR receptor-like serine/threonine-protein kinase GSO2 (1252 aa).

Positions 1–22 (MQQNSVLLALFFLCFSSGLGSG) are cleaved as a signal peptide. Over 23–876 (QPGQRDDLQT…QRSLSPKTVV (854 aa)) the chain is Extracellular. Asn-62, Asn-77, and Asn-117 each carry an N-linked (GlcNAc...) asparagine glycan. 10 LRR repeats span residues 94 to 118 (FNNLIHIDLSSNRLVGPIPTTLSNL), 120 to 143 (SSLESLHLFSNLLSGDIPSQLGSL), 144 to 166 (VNLKSLKLGDNELNGTIPETFGN), 168 to 190 (VNLQMLALASCRLTGLIPSRFGR), 191 to 215 (LVQLQTLILQDNELEGPIPAEIGNC), 217 to 239 (SLALFAAAFNRLNGSLPAELNRL), 240 to 263 (KNLQTLNLGDNSFSGEIPSQLGDL), 265 to 286 (SIQYLNLIGNQLQGLIPKRLTE), 287 to 310 (LANLQTLDLSSNNLTGVIHEEFWR), and 312 to 335 (NQLEFLVLAKNRLSGSLPKTICSN). N-linked (GlcNAc...) asparagine glycosylation is present at Asn-157. 2 N-linked (GlcNAc...) asparagine glycosylation sites follow: Asn-214 and Asn-229. N-linked (GlcNAc...) asparagine glycosylation occurs at Asn-299. Asn-336 carries N-linked (GlcNAc...) asparagine glycosylation. LRR repeat units lie at residues 337-360 (TSLKQLFLSETQLSGEIPAEISNC), 361-384 (QSLKLLDLSNNTLTGQIPDSLFQL), 386-408 (ELTNLYLNNNSLEGTLSSSISNL), 409-433 (TNLQEFTLYHNNLEGKVPKEIGFLG), 435-456 (LEIMYLYENRFSGEMPVEIGNC), 457-480 (TRLQEIDWYGNRLSGEIPSSIGRL), 481-504 (KDLTRLHLRENELVGNIPASLGNC), 506-528 (QMTVIDLADNQLSGSIPSSFGFL), 529-552 (TALELFMIYNNSLQGNLPDSLINL), 554-575 (NLTRINFSSNKFNGSISPLCGS), 577-599 (SYLSFDVTENGFEGDIPLELGKS), 600-622 (TNLDRLRLGKNQFTGRIPRTFGK), 623-648 (ISELSLLDISRNSLSGIIPVELGLCK), 650-670 (LTHIDLNNNYLSGVIPTWLGK), 671-695 (LPLLGELKLSSNKFVGSLPTEIFSL), 697-719 (NILTLFLDGNSLNGSIPQEIGNL), 720-743 (QALNALNLEENQLSGPLPSTIGKL), 745-767 (KLFELRLSRNALTGEIPVEIGQL), 768-792 (QDLQSALDLSYNNFTGRIPSTISTL), 793-816 (PKLESLDLSHNQLVGEVPGQIGDM), and 818-839 (SLGYLNLSYNNLEGKLKKQFSR). N-linked (GlcNAc...) asparagine glycosylation is found at Asn-370, Asn-394, and Asn-407. N-linked (GlcNAc...) asparagine glycosylation occurs at Asn-455. 4 N-linked (GlcNAc...) asparagine glycosylation sites follow: Asn-538, Asn-554, Asn-559, and Asn-566. An N-linked (GlcNAc...) asparagine glycan is attached at Asn-709. A glycan (N-linked (GlcNAc...) asparagine) is linked at Asn-780. An N-linked (GlcNAc...) asparagine glycan is attached at Asn-823. Residues 877–897 (IISAISSLAAIALMVLVIILF) form a helical membrane-spanning segment. Residues 898–1252 (FKQNHDLFKK…YREMQTDTDK (355 aa)) are Cytoplasmic-facing. Thr-945 carries the post-translational modification Phosphothreonine. The 285-residue stretch at 948–1232 (LNEEFMIGSG…PSSRQASEYL (285 aa)) folds into the Protein kinase domain. ATP-binding positions include 954–962 (IGSGGSGKV) and Lys-976. Residues Tyr-1024 and Tyr-1066 each carry the phosphotyrosine modification. Asp-1079 acts as the Proton acceptor in catalysis. A Phosphoserine modification is found at Ser-1114. 2 positions are modified to phosphotyrosine: Tyr-1124 and Tyr-1131.

This sequence belongs to the protein kinase superfamily. Ser/Thr protein kinase family. In terms of assembly, interacts with CIF1 and CIF2. As to expression, mostly expressed in siliques, seeds, developing embryos and seedlings, detected in flower buds, but not in roots, leaves or stems.

The protein resides in the cell membrane. It carries out the reaction L-seryl-[protein] + ATP = O-phospho-L-seryl-[protein] + ADP + H(+). The enzyme catalyses L-threonyl-[protein] + ATP = O-phospho-L-threonyl-[protein] + ADP + H(+). In terms of biological role, together with GSO1, receptor-like serine/threonine-kinase required during the development of the epidermal surface in embryos and cotyledons. Involved in the nuclear division phase of megagametogenesis. In coordination with GSO2, regulates root growth through control of cell division and cell fate specification. Controls seedling root growth by modulating sucrose response after germination. Receptor of the peptide hormones CIF1 and CIF2 required for contiguous Casparian strip diffusion barrier formation in roots. This Arabidopsis thaliana (Mouse-ear cress) protein is LRR receptor-like serine/threonine-protein kinase GSO2.